Consider the following 360-residue polypeptide: Chorismate synthase (360 aa).

NADP(+) is bound at residue Arg-48. FMN-binding positions include 125–127, 242–243, Gly-286, 301–305, and Arg-327; these read RSS, NA, and KPTSS.

This sequence belongs to the chorismate synthase family. Homotetramer. FMNH2 serves as cofactor.

The catalysed reaction is 5-O-(1-carboxyvinyl)-3-phosphoshikimate = chorismate + phosphate. It functions in the pathway metabolic intermediate biosynthesis; chorismate biosynthesis; chorismate from D-erythrose 4-phosphate and phosphoenolpyruvate: step 7/7. In terms of biological role, catalyzes the anti-1,4-elimination of the C-3 phosphate and the C-6 proR hydrogen from 5-enolpyruvylshikimate-3-phosphate (EPSP) to yield chorismate, which is the branch point compound that serves as the starting substrate for the three terminal pathways of aromatic amino acid biosynthesis. This reaction introduces a second double bond into the aromatic ring system. The sequence is that of Chorismate synthase from Pelagibacter ubique (strain HTCC1062).